The sequence spans 396 residues: Elongation factor Tu 2 (396 aa).

A tr-type G domain is found at 10 to 206; it reads KPHVNVGTIG…ALDTYIPTPE (197 aa). Positions 19 to 26 are G1; that stretch reads GHVDHGKT. 19–26 contributes to the GTP binding site; that stretch reads GHVDHGKT. Thr-26 lines the Mg(2+) pocket. Positions 60–64 are G2; the sequence is GITIN. Positions 81–84 are G3; sequence DCPG. Residues 81–85 and 136–139 contribute to the GTP site; these read DCPGH and NKAD. The tract at residues 136–139 is G4; it reads NKAD. A G5 region spans residues 174–176; that stretch reads SAK.

This sequence belongs to the TRAFAC class translation factor GTPase superfamily. Classic translation factor GTPase family. EF-Tu/EF-1A subfamily. As to quaternary structure, monomer.

It is found in the cytoplasm. The catalysed reaction is GTP + H2O = GDP + phosphate + H(+). In terms of biological role, GTP hydrolase that promotes the GTP-dependent binding of aminoacyl-tRNA to the A-site of ribosomes during protein biosynthesis. In Methylobacillus flagellatus (strain ATCC 51484 / DSM 6875 / VKM B-1610 / KT), this protein is Elongation factor Tu 2.